A 531-amino-acid polypeptide reads, in one-letter code: Squalene epoxidase 1 (531 aa).

Residues 9–29 traverse the membrane as a helical segment; sequence ILPLLISSLLISFVAFYGFFV. Residues 70-71, 90-91, arginine 98, arginine 169, valine 185, aspartate 347, and methionine 360 each bind FAD; these read VA and ER. The next 2 membrane-spanning stretches (helical) occupy residues 458 to 478 and 483 to 503; these read LVCH…IPFP and IWLG…IIKA.

It belongs to the squalene monooxygenase family. FAD is required as a cofactor. Expressed in seedlings, leaves, stems, inflorescences, sepals, style and siliques. Expressed in expanded cotyledons, root tips and cortical cells of the root elongation zone, but not in root hair cells. In leaves, expressed in most cells, with a very strong expression in stomata.

The protein resides in the membrane. It catalyses the reaction squalene + reduced [NADPH--hemoprotein reductase] + O2 = (S)-2,3-epoxysqualene + oxidized [NADPH--hemoprotein reductase] + H2O + H(+). Its pathway is terpene metabolism; lanosterol biosynthesis; lanosterol from farnesyl diphosphate: step 2/3. In terms of biological role, catalyzes the stereospecific oxidation of squalene to (S)-2,3-epoxysqualene, and is considered to be a rate-limiting enzyme in steroid biosynthesis. Can produce not only oxidosqualene, but also 2,3:22,23-dioxidosqualene. Main squalene epoxidase in the root. Sqe1 mutants may show defects in membrane lipid rafts, impairing the correct localization of RHD2 NADPH oxidase and the proper polarized production of ROS. In Arabidopsis thaliana (Mouse-ear cress), this protein is Squalene epoxidase 1 (SQE1).